A 69-amino-acid chain; its full sequence is Large ribosomal subunit protein uL29 (69 aa).

It belongs to the universal ribosomal protein uL29 family.

This Polaromonas sp. (strain JS666 / ATCC BAA-500) protein is Large ribosomal subunit protein uL29.